The following is a 117-amino-acid chain: Small ribosomal subunit protein bS6 (117 aa).

Positions 96–117 (HAEGPSVQMQKRDERDNRRERR) are disordered. Residues 105-117 (QKRDERDNRRERR) show a composition bias toward basic and acidic residues.

The protein belongs to the bacterial ribosomal protein bS6 family.

Binds together with bS18 to 16S ribosomal RNA. The polypeptide is Small ribosomal subunit protein bS6 (Ruegeria sp. (strain TM1040) (Silicibacter sp.)).